We begin with the raw amino-acid sequence, 337 residues long: Glycerol-3-phosphate dehydrogenase [NAD(P)+] 2 (337 aa).

NADPH-binding residues include Thr-11, Trp-12, and Lys-105. 3 residues coordinate sn-glycerol 3-phosphate: Lys-105, Gly-139, and Thr-141. An NADPH-binding site is contributed by Ala-143. Lys-194, Asp-247, Ser-257, Arg-258, and Asn-259 together coordinate sn-glycerol 3-phosphate. Catalysis depends on Lys-194, which acts as the Proton acceptor. Arg-258 provides a ligand contact to NADPH. 2 residues coordinate NADPH: Val-282 and Glu-284.

This sequence belongs to the NAD-dependent glycerol-3-phosphate dehydrogenase family.

It is found in the cytoplasm. It catalyses the reaction sn-glycerol 3-phosphate + NAD(+) = dihydroxyacetone phosphate + NADH + H(+). It carries out the reaction sn-glycerol 3-phosphate + NADP(+) = dihydroxyacetone phosphate + NADPH + H(+). The protein operates within membrane lipid metabolism; glycerophospholipid metabolism. Its function is as follows. Catalyzes the reduction of the glycolytic intermediate dihydroxyacetone phosphate (DHAP) to sn-glycerol 3-phosphate (G3P), the key precursor for phospholipid synthesis. This Lactobacillus delbrueckii subsp. bulgaricus (strain ATCC 11842 / DSM 20081 / BCRC 10696 / JCM 1002 / NBRC 13953 / NCIMB 11778 / NCTC 12712 / WDCM 00102 / Lb 14) protein is Glycerol-3-phosphate dehydrogenase [NAD(P)+] 2.